Reading from the N-terminus, the 530-residue chain is Membrane-associated transporter protein (530 aa).

The Cytoplasmic segment spans residues 1–45; that stretch reads MSGSNGPTDTHTYQSLAEDCPFGSVEQPKRSTGRLVMHSMAMFGR. A helical membrane pass occupies residues 46–66; it reads EFCYAVEAAYVTPVLLSVGLP. The Extracellular segment spans residues 67–68; the sequence is KS. The chain crosses the membrane as a helical span at residues 69-89; that stretch reads LYSMVWLLSPILGFLLQPVVG. Over 90 to 105 the chain is Cytoplasmic; sequence SASDHCRARWGRRRPY. Residues 106–126 form a helical membrane-spanning segment; that stretch reads ILTLAIMMLLGMALYLNGDAV. Topologically, residues 127 to 138 are extracellular; that stretch reads VSALVANPRQKL. Residues 139-159 form a helical membrane-spanning segment; it reads IWAISITMVGVVLFDFSADFI. The Cytoplasmic portion of the chain corresponds to 160-184; it reads DGPIKAYLFDVCSHQDKEKGLHYHA. A helical transmembrane segment spans residues 185-205; that stretch reads LFTGFGGALGYILGAIDWVHL. At 206-216 the chain is on the extracellular side; sequence DLGRLLGTEFQ. Residues 217–237 form a helical membrane-spanning segment; that stretch reads VMFFFSALVLILCFITHLCSI. The Cytoplasmic portion of the chain corresponds to 238-318; sequence PEAPLRDAAT…ALVNMPSHYR (81 aa). Positions 275-299 are disordered; the sequence is KNGGADTEQPVQEWKNKKPSGQSQR. Residues 319 to 339 traverse the membrane as a helical segment; it reads CLCVSHLIGWTAFLSNMLFFT. Residues 340-366 lie on the Extracellular side of the membrane; that stretch reads DFMGQIVYHGDPYGAHNSTEFLIYERG. An N-linked (GlcNAc...) asparagine glycan is attached at Asn356. The chain crosses the membrane as a helical span at residues 367 to 387; sequence VEVGCWGLCINSVFSSVYSYF. Residues 388–398 are Cytoplasmic-facing; sequence QKAMVSYIGLK. The chain crosses the membrane as a helical span at residues 399–419; the sequence is GLYFMGYLLFGLGTGFIGLFP. Over 420-425 the chain is Extracellular; sequence NVYSTL. The helical transmembrane segment at 426 to 446 threads the bilayer; it reads VLCSMFGVMSSTLYTVPFNLI. Residues 447–477 are Cytoplasmic-facing; sequence AEYHREEEKEKGQEAPGGPDNQGRGKGVDCA. A helical transmembrane segment spans residues 478–498; that stretch reads ALTCMVQLAQILVGGGLGFLV. Topologically, residues 499-504 are extracellular; that stretch reads NMAGSV. Residues 505-525 traverse the membrane as a helical segment; the sequence is VVVVITASAVSLIGCCFVALF. The Cytoplasmic segment spans residues 526-530; it reads VRYVD.

Belongs to the glycoside-pentoside-hexuronide (GPH) cation symporter transporter (TC 2.A.2) family. As to quaternary structure, interacts with TYRP1. Mainly expressed in eyeballs and skin melanocytes. Also detected in kidney, colon, gall bladder and pancreas.

The protein localises to the melanosome membrane. The enzyme catalyses sucrose(out) + H(+)(out) = sucrose(in) + H(+)(in). The catalysed reaction is D-glucose(out) + H(+)(out) = D-glucose(in) + H(+)(in). Its function is as follows. Proton-associated glucose and sucrose transporter. May be able to transport also fructose. Expressed at a late melanosome maturation stage where functions as a proton/glucose exporter which increase lumenal pH by decreasing glycolysis. Regulates melanogenesis by maintaining melanosome neutralization that is initially initiated by transient OCA2 and required for a proper function of the tyrosinase TYR. In Mus musculus (Mouse), this protein is Membrane-associated transporter protein (Slc45a2).